Here is a 195-residue protein sequence, read N- to C-terminus: Archaetidylinositol phosphate synthase (195 aa).

A run of 2 helical transmembrane segments spans residues 27 to 47 (IALP…AASA) and 54 to 74 (LITG…DGAV). Positions 68, 71, 89, and 93 each coordinate Mg(2+). The active-site Proton acceptor is aspartate 93. Transmembrane regions (helical) follow at residues 99 to 119 (IIII…LLAL) and 158 to 178 (LAGY…LAAL).

This sequence belongs to the CDP-alcohol phosphatidyltransferase class-I family. It depends on Mn(2+) as a cofactor. Mg(2+) serves as cofactor.

The protein localises to the cell membrane. It carries out the reaction CDP-2,3-bis-O-(phytanyl)-sn-glycerol + 1D-myo-inositol 3-phosphate = saturated 1-archaetidyl-1D-myo-inositol 3-phosphate + CMP + H(+). Its pathway is lipid metabolism; phospholipid metabolism. Functionally, catalyzes the formation of archaetidylinositol phosphate (AIP) from CDP-archaeol (CDP-ArOH or CDP-2,3-bis-(O-phytanyl)-sn-glycerol) and 1L-myo-inositol 1-phosphate (IP or 1D-myo-inositol 3-phosphate). AIP is a precursor of archaetidyl-myo-inositol (AI), an ether-type inositol phospholipid ubiquitously distributed in archaea membranes and essential for glycolipid biosynthesis in archaea. This Methanothermobacter thermautotrophicus (strain ATCC 29096 / DSM 1053 / JCM 10044 / NBRC 100330 / Delta H) (Methanobacterium thermoautotrophicum) protein is Archaetidylinositol phosphate synthase.